The sequence spans 539 residues: ATP synthase subunit beta (539 aa).

Residues 1–44 (MAKTPAEKPATAAKKPAAPKAAAAPKAAAAKAPAAAKAPAAKKP) form a disordered region. 212–219 (GGAGVGKT) contributes to the ATP binding site.

The protein belongs to the ATPase alpha/beta chains family. As to quaternary structure, F-type ATPases have 2 components, CF(1) - the catalytic core - and CF(0) - the membrane proton channel. CF(1) has five subunits: alpha(3), beta(3), gamma(1), delta(1), epsilon(1). CF(0) has three main subunits: a(1), b(2) and c(9-12). The alpha and beta chains form an alternating ring which encloses part of the gamma chain. CF(1) is attached to CF(0) by a central stalk formed by the gamma and epsilon chains, while a peripheral stalk is formed by the delta and b chains.

It localises to the cell inner membrane. It carries out the reaction ATP + H2O + 4 H(+)(in) = ADP + phosphate + 5 H(+)(out). Functionally, produces ATP from ADP in the presence of a proton gradient across the membrane. The catalytic sites are hosted primarily by the beta subunits. This Caulobacter vibrioides (strain ATCC 19089 / CIP 103742 / CB 15) (Caulobacter crescentus) protein is ATP synthase subunit beta.